We begin with the raw amino-acid sequence, 667 residues long: tRNA 5-methylaminomethyl-2-thiouridine biosynthesis bifunctional protein MnmC (667 aa).

The segment at 1–241 (MHKLTFAQLS…KREMLCGEKA (241 aa)) is tRNA (mnm(5)s(2)U34)-methyltransferase. The tract at residues 268-667 (VGGGIASLFV…RKWLKGSKVV (400 aa)) is FAD-dependent cmnm(5)s(2)U34 oxidoreductase.

In the N-terminal section; belongs to the methyltransferase superfamily. tRNA (mnm(5)s(2)U34)-methyltransferase family. The protein in the C-terminal section; belongs to the DAO family. FAD is required as a cofactor.

It is found in the cytoplasm. It catalyses the reaction 5-aminomethyl-2-thiouridine(34) in tRNA + S-adenosyl-L-methionine = 5-methylaminomethyl-2-thiouridine(34) in tRNA + S-adenosyl-L-homocysteine + H(+). In terms of biological role, catalyzes the last two steps in the biosynthesis of 5-methylaminomethyl-2-thiouridine (mnm(5)s(2)U) at the wobble position (U34) in tRNA. Catalyzes the FAD-dependent demodification of cmnm(5)s(2)U34 to nm(5)s(2)U34, followed by the transfer of a methyl group from S-adenosyl-L-methionine to nm(5)s(2)U34, to form mnm(5)s(2)U34. The protein is tRNA 5-methylaminomethyl-2-thiouridine biosynthesis bifunctional protein MnmC of Haemophilus ducreyi (strain 35000HP / ATCC 700724).